The primary structure comprises 449 residues: Protein king tubby (449 aa).

The disordered stretch occupies residues 123–197; the sequence is SAVHSANSTQ…GTGGESEGDV (75 aa). Polar residues predominate over residues 124 to 145; it reads AVHSANSTQSQRPRPRQHSFSD. Phosphoserine is present on Ser142. The span at 154-166 shows a compositional bias: low complexity; that stretch reads NRNVAAAAPVRPA. The segment covering 183 to 192 has biased composition (gly residues); sequence NGTGNGTGGE.

The protein belongs to the TUB family.

The protein localises to the cytoplasm. Its subcellular location is the nucleus. The protein resides in the cell projection. It is found in the cilium membrane. It localises to the rhabdomere. The protein is Protein king tubby of Drosophila ananassae (Fruit fly).